The primary structure comprises 379 residues: Putative F-box protein At5g62660 (379 aa).

Residues 35 to 84 enclose the F-box domain; the sequence is ALVAPEIPLDLLIEILTKLPAKSLMRFKCVSKLWSSLIRSRFFSNCYLTV.

This Arabidopsis thaliana (Mouse-ear cress) protein is Putative F-box protein At5g62660.